The sequence spans 275 residues: Large ribosomal subunit protein uL2 (275 aa).

2 disordered regions span residues 28 to 59 and 224 to 275; these read KPFA…GGHK and AMNP…RHKR. Over residues 35-49 the composition is skewed to polar residues; it reads DSQSTTAGRNNNGHI. The segment covering 50–59 has biased composition (basic residues); the sequence is TTRHKGGGHK.

It belongs to the universal ribosomal protein uL2 family. As to quaternary structure, part of the 50S ribosomal subunit. Forms a bridge to the 30S subunit in the 70S ribosome.

Functionally, one of the primary rRNA binding proteins. Required for association of the 30S and 50S subunits to form the 70S ribosome, for tRNA binding and peptide bond formation. It has been suggested to have peptidyltransferase activity; this is somewhat controversial. Makes several contacts with the 16S rRNA in the 70S ribosome. The chain is Large ribosomal subunit protein uL2 from Paraburkholderia xenovorans (strain LB400).